Reading from the N-terminus, the 166-residue chain is Endoribonuclease YbeY (166 aa).

3 residues coordinate Zn(2+): His132, His136, and His142.

It belongs to the endoribonuclease YbeY family. Zn(2+) is required as a cofactor.

It localises to the cytoplasm. Single strand-specific metallo-endoribonuclease involved in late-stage 70S ribosome quality control and in maturation of the 3' terminus of the 16S rRNA. In Clostridium acetobutylicum (strain ATCC 824 / DSM 792 / JCM 1419 / IAM 19013 / LMG 5710 / NBRC 13948 / NRRL B-527 / VKM B-1787 / 2291 / W), this protein is Endoribonuclease YbeY.